Here is a 97-residue protein sequence, read N- to C-terminus: Large ribosomal subunit protein bL28 (97 aa).

It belongs to the bacterial ribosomal protein bL28 family.

This chain is Large ribosomal subunit protein bL28, found in Rickettsia felis (strain ATCC VR-1525 / URRWXCal2) (Rickettsia azadi).